The chain runs to 257 residues: Trans-aconitate 2-methyltransferase (257 aa).

It belongs to the methyltransferase superfamily. Tam family.

It localises to the cytoplasm. The enzyme catalyses trans-aconitate + S-adenosyl-L-methionine = (E)-3-(methoxycarbonyl)pent-2-enedioate + S-adenosyl-L-homocysteine. Functionally, catalyzes the S-adenosylmethionine monomethyl esterification of trans-aconitate. This Rhizobium meliloti (strain 1021) (Ensifer meliloti) protein is Trans-aconitate 2-methyltransferase.